We begin with the raw amino-acid sequence, 334 residues long: Meso-diaminopimelate D-dehydrogenase (334 aa).

NADP(+) contacts are provided by residues 16–19 (YGNL), 40–42 (TRR), 75–78 (CSGS), 98–100 (GFD), and 127–131 (CGWDP). Substrate contacts are provided by residues D100, D130, W154, 160-161 (QG), T179, R205, H255, and N284.

This sequence belongs to the diaminopimelate dehydrogenase family. As to quaternary structure, homodimer.

The enzyme catalyses meso-2,6-diaminopimelate + NADP(+) + H2O = (S)-2-amino-6-oxoheptanedioate + NH4(+) + NADPH + H(+). The protein operates within amino-acid biosynthesis; L-lysine biosynthesis via DAP pathway; DL-2,6-diaminopimelate from (S)-tetrahydrodipicolinate: step 1/1. Its function is as follows. Catalyzes the reversible NADPH-dependent reductive amination of L-2-amino-6-oxopimelate, the acyclic form of L-tetrahydrodipicolinate, to generate the meso compound, D,L-2,6-diaminopimelate. Probably plays a role in lysine biosynthesis. Exhibits a high substrate specificity for meso-2,6-diaminopimelate (m-DAP), since the activity with L,L-2,6-diaminopimelate is less than 5% of the activity observed with m-DAP. Can use NAD(+) only very poorly since the activity observed in the presence of NAD(+) is about 0.3% of that with NADP(+). This Acetivibrio thermocellus (strain ATCC 27405 / DSM 1237 / JCM 9322 / NBRC 103400 / NCIMB 10682 / NRRL B-4536 / VPI 7372) (Clostridium thermocellum) protein is Meso-diaminopimelate D-dehydrogenase (ddh).